We begin with the raw amino-acid sequence, 793 residues long: Short transient receptor potential channel 1 (793 aa).

A disordered region spans residues 1 to 30; it reads MMAALYPSTDLSGASSSSLPSSPSSSSPNE. Topologically, residues 1–345 are cytoplasmic; it reads MMAALYPSTD…FGQMSGYRRK (345 aa). The span at 15-28 shows a compositional bias: low complexity; the sequence is SSSSLPSSPSSSSP. ANK repeat units lie at residues 46 to 75, 83 to 109, 111 to 156, and 158 to 180; these read LNEK…SGDL, LGRN…YGCQ, ADAL…EYST, and MDVA…MLLK. Residues histidine 189, cysteine 193, cysteine 195, and cysteine 198 each contribute to the Zn(2+) site. Residues 346–379 constitute an intramembrane region (discontinuously helical); it reads PTCKKIMTVLTVGIFWPVLSLCYLIAPKSQFGRI. Over 380-386 the chain is Cytoplasmic; the sequence is IHTPFMK. The chain crosses the membrane as a helical span at residues 387-404; the sequence is FIIHGASYFTFLLLLNLY. Topologically, residues 405–422 are extracellular; the sequence is SLVYNEDKKNTMGPALER. Residues 423 to 439 form a helical membrane-spanning segment; it reads IDYLLILWIIGMIWSDI. At 440 to 455 the chain is on the cytoplasmic side; that stretch reads KRLWYEGLEDFLEESR. A helical membrane pass occupies residues 456-475; that stretch reads NQLSFVMNSLYLATFALKVV. Topologically, residues 476–496 are extracellular; sequence AHNKFHDFADRKDWDAFHPTL. A helical membrane pass occupies residues 497 to 517; the sequence is VAEGLFAFANVLSYLRLFFMY. The Cytoplasmic segment spans residues 518 to 536; sequence TTSSILGPLQISMGQMLQD. The chain crosses the membrane as a helical span at residues 537–558; it reads FGKFLGMFLLVLFSFTIGLTQL. The Extracellular portion of the chain corresponds to 559 to 623; it reads YDKGYTSKEQ…GEELQSFVGA (65 aa). Residues cysteine 571 and cysteine 576 are joined by a disulfide bond. Residues 624–644 traverse the membrane as a helical segment; sequence VIVGTYNVVVVIVLTKLLVAM. Residues 645–793 are Cytoplasmic-facing; the sequence is LHKSFQLIAN…SKYAMFYPRN (149 aa).

This sequence belongs to the transient receptor (TC 1.A.4) family. STrpC subfamily. TRPC1 sub-subfamily. Heterotetramer with TRPC4 and/or TRPC5. Forms a heteromeric ion channel with TRPC4, with a 1:3 TRPC1:TRPC4 stoichiometry. Unlike other TRP channel proteins, does not form a homomeric channel. Interacts with TRPC4AP. Interacts with ITPR3. Interacts with MX1 and RNF24. Interacts with FKBP4. Interacts with PLSCR1. Interacts with PKD2L2. Forms a heterotetramer with PKD2 with a 2:2 stoichiometry; has distinct channel properties separate from PKD2 or TRPC1 homomers alone. In terms of assembly, interacts with isoform 2 of TRPC3. Post-translationally, activation of PRKCA induces phosphorylation of TRPC1 and subsequent Ca2+ entry into cells. As to expression, seems to be ubiquitous.

The protein localises to the cell membrane. The catalysed reaction is Ca(2+)(in) = Ca(2+)(out). It carries out the reaction Na(+)(in) = Na(+)(out). It catalyses the reaction Li(+)(in) = Li(+)(out). The enzyme catalyses Cs(+)(in) = Cs(+)(out). With respect to regulation, may be operated by a phosphatidylinositol second messenger system activated by receptor tyrosine kinases or G-protein coupled receptors. Also activated by intracellular calcium store depletion. Inhibited by xanthine-based inhibitor Pico145. Forms a receptor-activated non-selective calcium permeant cation channel. Forms a heteromeric ion channel with TRPC4 or TRPC5 that has reduced calcium permeability compared to the homomeric TRPC4 or TRPC5 channel. Also permeable to monovalent ions including sodium, lithium and cesium ions. Its function is as follows. Forms a receptor-activated non-selective calcium permeant cation channel. Also activated by intracellular calcium store depletion. In Homo sapiens (Human), this protein is Short transient receptor potential channel 1 (TRPC1).